Reading from the N-terminus, the 325-residue chain is Psp operon transcriptional activator (325 aa).

One can recognise a Sigma-54 factor interaction domain in the interval 15–237 (FLEVLEQVSH…ELKNVVERSV (223 aa)). ATP is bound by residues 36–43 (GERGTGKE) and 99–108 (ADGGTLFLDE). The H-T-H motif DNA-binding region spans 302–321 (QKRAAELLGLTYHQFRALLK).

Forms a complex with PspA, which is composed of around 6 PspF subunits and 6 PspA subunits.

The protein resides in the cytoplasm. With respect to regulation, ATPase activity is inhibited by interaction with PspA. Under inducing conditions, the interaction is disrupted, allowing activation of psp transcription. Transcriptional activator for the phage shock protein (psp) operon (pspABCDE) and pspG gene. The chain is Psp operon transcriptional activator (pspF) from Escherichia coli (strain K12).